A 269-amino-acid chain; its full sequence is Putative phosphatase M6_Spy0533 (269 aa).

Catalysis depends on aspartate 9, which acts as the Nucleophile. Aspartate 9 contributes to the Mg(2+) binding site. A phosphate-binding site is contributed by isoleucine 10. Aspartate 11 serves as a coordination point for Mg(2+). Phosphate-binding positions include 43 to 44 (TG) and lysine 196. Aspartate 219 is a binding site for Mg(2+). Asparagine 222 provides a ligand contact to phosphate.

Requires Mg(2+) as cofactor.

The polypeptide is Putative phosphatase M6_Spy0533 (Streptococcus pyogenes serotype M6 (strain ATCC BAA-946 / MGAS10394)).